Reading from the N-terminus, the 119-residue chain is Beta-2-microglobulin (119 aa).

Positions 1–20 are cleaved as a signal peptide; the sequence is MVCSVVVALLALLSLSGLEA. One can recognise an Ig-like C1-type domain in the interval 25–114; sequence PKIQVYSRHP…VTFSTPKTVK (90 aa). The cysteines at positions 45 and 100 are disulfide-linked.

This sequence belongs to the beta-2-microglobulin family. In terms of assembly, heterodimer of an alpha chain and a beta chain. Beta-2-microglobulin is the beta-chain of major histocompatibility complex class I molecules.

The protein resides in the secreted. Component of the class I major histocompatibility complex (MHC). Involved in the presentation of peptide antigens to the immune system. The chain is Beta-2-microglobulin (B2M) from Cebuella pygmaea (Pygmy marmoset).